The chain runs to 354 residues: WASH complex subunit 3 (354 aa).

Residues 76 to 354 (SSANVPVHNT…DDDDDDDESW (279 aa)) form a disordered region. Over residues 107 to 143 (IPPPPPPPPPPMTGVPPPPPPPPPPPISKSNIPPPPA) the composition is skewed to pro residues. A compositionally biased stretch (acidic residues) spans 150–159 (ESDDDDEDNN). Residues 213 to 244 (PQPPQPQPQSPSPQPPPPPTTTSSIPVPPPPF) show a composition bias toward pro residues. The span at 251–260 (SDDDDDDDEG) shows a compositional bias: acidic residues. The segment covering 277–290 (NNNSNSNSYSNNNN) has biased composition (low complexity). 2 stretches are compositionally biased toward acidic residues: residues 293 to 307 (DDDD…DDDN) and 342 to 354 (DADD…DESW).

Belongs to the CCDC53 family. Probable component of the WASH complex.

This is WASH complex subunit 3 from Dictyostelium discoideum (Social amoeba).